The sequence spans 396 residues: MVHVTLLYGGRSAEHDVSVRSARFVARTLCLQHTVMLIGITRRGVWYAQPACALEQLCTGTVALSIQEDEKRRVCLVPGGGTAGAFVIAGMPCVTDVVFPVLHGSYGEDGTVQGLLEMLQVPYVGCGVCASALAMDKVKAKMLWQAAGLPVLPFVFFRKDAWRMHMQEFVAQLETRLGYPLFVKPAQAGSSVGASAVQTRAPLIPAIEAAFQWDEVVLVERYVRAREIECALSGNGPYTVHGAGEVIAQGAFYDYEEKYADASVARVLVTAPLETAQYEQITTLALRAYEALGLTGLARVDFFLLETGEVYVNEVNTMPGFTSISLFPQICQAAGVAPQDLMAQLLSCARERFAARAALSTDLHAHVCAPSVTAAHDPDAQGDDWDQRDSNPLPTA.

Residues 141–347 (KMLWQAAGLP…PQDLMAQLLS (207 aa)) enclose the ATP-grasp domain. An ATP-binding site is contributed by 174 to 229 (ETRLGYPLFVKPAQAGSSVGASAVQTRAPLIPAIEAAFQWDEVVLVERYVRAREIE). Mg(2+) is bound by residues Asp301, Glu314, and Asn316. Positions 374-396 (AAHDPDAQGDDWDQRDSNPLPTA) are disordered.

The protein belongs to the D-alanine--D-alanine ligase family. Mg(2+) is required as a cofactor. Requires Mn(2+) as cofactor.

It is found in the cytoplasm. It catalyses the reaction 2 D-alanine + ATP = D-alanyl-D-alanine + ADP + phosphate + H(+). It participates in cell wall biogenesis; peptidoglycan biosynthesis. Its function is as follows. Cell wall formation. The polypeptide is D-alanine--D-alanine ligase (Treponema pallidum (strain Nichols)).